Consider the following 203-residue polypeptide: Glycerol-3-phosphate acyltransferase (203 aa).

Helical transmembrane passes span 6–26 (LTLL…AVLV), 82–102 (AISL…PIFF), 118–138 (APIG…LVLI), and 141–161 (YSSL…WWLD).

Belongs to the PlsY family. Probably interacts with PlsX.

Its subcellular location is the cell inner membrane. The catalysed reaction is an acyl phosphate + sn-glycerol 3-phosphate = a 1-acyl-sn-glycero-3-phosphate + phosphate. Its pathway is lipid metabolism; phospholipid metabolism. Functionally, catalyzes the transfer of an acyl group from acyl-phosphate (acyl-PO(4)) to glycerol-3-phosphate (G3P) to form lysophosphatidic acid (LPA). This enzyme utilizes acyl-phosphate as fatty acyl donor, but not acyl-CoA or acyl-ACP. This Shewanella sp. (strain ANA-3) protein is Glycerol-3-phosphate acyltransferase.